Reading from the N-terminus, the 777-residue chain is Glucocorticoid receptor (777 aa).

The span at 1–14 shows a compositional bias: basic and acidic residues; sequence MDSKESLTPGKEEN. The segment at 1-22 is disordered; the sequence is MDSKESLTPGKEENPSSVLTQE. The modulating stretch occupies residues 1–420; it reads MDSKESLTPG…TATTGPPPKL (420 aa). A Phosphothreonine modification is found at Thr-8. Arg-23 is subject to Omega-N-methylarginine. Phosphoserine is present on residues Ser-45, Ser-113, Ser-134, and Ser-141. Residues 130 to 183 form a disordered region; that stretch reads NRSTSVPENPKSSASSSVSAAPKEKEFPKTHSDVSSEQQNLKGQTGTNGGNAKL. The segment covering 134-150 has biased composition (low complexity); it reads SVPENPKSSASSSVSAA. Positions 151–163 are enriched in basic and acidic residues; the sequence is PKEKEFPKTHSDV. Residues 164 to 174 show a composition bias toward polar residues; that stretch reads SSEQQNLKGQT. A phosphoserine mark is found at Ser-203, Ser-211, and Ser-226. Residue Lys-258 forms a Glycyl lysine isopeptide (Lys-Gly) (interchain with G-Cter in SUMO2) linkage. At Ser-267 the chain carries Phosphoserine. Residues Lys-277 and Lys-293 each participate in a glycyl lysine isopeptide (Lys-Gly) (interchain with G-Cter in SUMO); alternate cross-link. Glycyl lysine isopeptide (Lys-Gly) (interchain with G-Cter in SUMO2); alternate cross-links involve residues Lys-277 and Lys-293. The span at 394–414 shows a compositional bias: low complexity; it reads SSPSMRPDVSSPPSSSSTATT. The segment at 394–415 is disordered; that stretch reads SSPSMRPDVSSPPSSSSTATTG. Ser-404 bears the Phosphoserine mark. A Glycyl lysine isopeptide (Lys-Gly) (interchain with G-Cter in ubiquitin) cross-link involves residue Lys-419. NR C4-type zinc fingers lie at residues 421 to 441 and 457 to 481; these read CLVC…CGSC and CAGR…YRKC. The nuclear receptor DNA-binding region spans 421 to 486; it reads CLVCSDEASG…RYRKCLQAGM (66 aa). Lys-480, Lys-492, Lys-494, and Lys-495 each carry N6-acetyllysine. The interval 485-777 is interaction with CLOCK; sequence GMNLEARKTK…NIRKLLFHQK (293 aa). The interval 487-523 is hinge; sequence NLEARKTKKKIKGIQQATTGVSQETSENPANKTIVPA. One can recognise an NR LBD domain in the interval 524-758; the sequence is TLPQLTPTLV…FPEMLAEIIT (235 aa). The tract at residues 532–697 is interaction with CRY1; the sequence is LVSLLEVIEP…EIRMTYIKEL (166 aa). A Glycyl lysine isopeptide (Lys-Gly) (interchain with G-Cter in SUMO) cross-link involves residue Lys-703.

Belongs to the nuclear hormone receptor family. NR3 subfamily. In terms of assembly, heteromultimeric cytoplasmic complex with HSP90AA1, HSPA1A/HSPA1B, and FKBP5 or another immunophilin such as PPID, STIP1, or the immunophilin homolog PPP5C. Upon ligand binding FKBP5 dissociates from the complex and FKBP4 takes its place, thereby linking the complex to dynein and mediating transport to the nucleus, where the complex dissociates. Probably forms a complex composed of chaperones HSP90 and HSP70, co-chaperones CDC37, PPP5C, TSC1 and client protein TSC2, CDK4, AKT, RAF1 and NR3C1; this complex does not contain co-chaperones STIP1/HOP and PTGES3/p23. Directly interacts with UNC45A. Binds to DNA as a homodimer, and as heterodimer with NR3C2 or the retinoid X receptor. Binds STAT5A and STAT5B homodimers and heterodimers. Interacts with NRIP1, POU2F1, POU2F2 and TRIM28. Interacts with several coactivator complexes, including the SMARCA4 complex, CREBBP/EP300, TADA2L (Ada complex) and p160 coactivators such as NCOA2 and NCOA6. Interaction with BAG1 inhibits transactivation. Interacts with HEXIM1 and TGFB1I1. Interacts with NCOA1. Interacts with NCOA3, SMARCA4, SMARCC1, SMARCD1, and SMARCE1. Interacts with CLOCK, CRY1 and CRY2 in a ligand-dependent fashion. Interacts with CIART. Interacts with RWDD3. Interacts with UBE2I/UBC9 and this interaction is enhanced in the presence of RWDD3. Interacts with GRIP1. Interacts with NR4A3 (via nuclear receptor DNA-binding domain), represses transcription activity of NR4A3 on the POMC promoter Nur response element (NurRE). Directly interacts with PNRC2 to attract and form a complex with UPF1 and DCP1A; the interaction leads to rapid mRNA degradation. Interacts with GSK3B. Interacts with FNIP1 and FNIP2. Interacts (via C-terminus) with HNRNPU (via C-terminus). Interacts with MCM3AP. Interacts (via domain NR LBD) with HSP90AA1 and HSP90AB1. In the absence of hormonal ligand, interacts with TACC1. Interacts (via NR LBD domain) with ZNF764 (via KRAB domain); the interaction regulates transcription factor activity of NR3C1 by directing its actions toward certain biologic pathways. Acetylation by CLOCK reduces its binding to glucocorticoid response elements and its transcriptional activity. Post-translationally, increased proteasome-mediated degradation in response to glucocorticoids. In terms of processing, phosphorylated in the absence of hormone; becomes hyperphosphorylated in the presence of glucocorticoid. The Ser-203, Ser-226 and Ser-404-phosphorylated forms are mainly cytoplasmic, and the Ser-211-phosphorylated form is nuclear. Phosphorylation at Ser-211 increases transcriptional activity. Phosphorylation at Ser-203, Ser-226 and Ser-404 decreases signaling capacity. Phosphorylation at Ser-404 may protect from glucocorticoid-induced apoptosis. Phosphorylation at Ser-203 and Ser-211 is not required in regulation of chromosome segregation. May be dephosphorylated by PPP5C, attenuates NR3C1 action. Ubiquitinated by UBR5, leading to its degradation: UBR5 specifically recognizes and binds ligand-bound NR3C1 when it is not associated with coactivators (NCOAs). In presence of NCOAs, the UBR5-degron is not accessible, preventing its ubiquitination and degradation. Post-translationally, sumoylation at Lys-277 and Lys-293 negatively regulates its transcriptional activity. Sumoylation at Lys-703 positively regulates its transcriptional activity in the presence of RWDD3. Sumoylation at Lys-277 and Lys-293 is dispensable whereas sumoylation at Lys-703 is critical for the stimulatory effect of RWDD3 on its transcriptional activity. Heat shock increases sumoylation in a RWDD3-dependent manner.

Its subcellular location is the cytoplasm. It is found in the nucleus. The protein localises to the mitochondrion. It localises to the cytoskeleton. The protein resides in the spindle. Its subcellular location is the microtubule organizing center. It is found in the centrosome. The protein localises to the chromosome. It localises to the nucleoplasm. In terms of biological role, receptor for glucocorticoids (GC). Has a dual mode of action: as a transcription factor that binds to glucocorticoid response elements (GRE), both for nuclear and mitochondrial DNA, and as a modulator of other transcription factors. Affects inflammatory responses, cellular proliferation and differentiation in target tissues. Involved in chromatin remodeling. Plays a role in rapid mRNA degradation by binding to the 5' UTR of target mRNAs and interacting with PNRC2 in a ligand-dependent manner which recruits the RNA helicase UPF1 and the mRNA-decapping enzyme DCP1A, leading to RNA decay. Could act as a coactivator for STAT5-dependent transcription upon growth hormone (GH) stimulation and could reveal an essential role of hepatic GR in the control of body growth. Mediates glucocorticoid-induced apoptosis. Promotes accurate chromosome segregation during mitosis. May act as a tumor suppressor. May play a negative role in adipogenesis through the regulation of lipolytic and antilipogenic gene expression. This chain is Glucocorticoid receptor (NR3C1), found in Saguinus oedipus (Cotton-top tamarin).